Reading from the N-terminus, the 253-residue chain is Flap endonuclease Xni (253 aa).

Aspartate 105 is a Mg(2+) binding site. Positions 162–251 (ERHQLLDYIA…HLKLSDLRVN (90 aa)) constitute a 5'-3' exonuclease domain. 4 residues coordinate K(+): leucine 172, proline 181, isoleucine 183, and isoleucine 186. The tract at residues 185–190 (GIGPKS) is interaction with DNA.

This sequence belongs to the Xni family. Requires Mg(2+) as cofactor. It depends on K(+) as a cofactor.

Has flap endonuclease activity. During DNA replication, flap endonucleases cleave the 5'-overhanging flap structure that is generated by displacement synthesis when DNA polymerase encounters the 5'-end of a downstream Okazaki fragment. This is Flap endonuclease Xni from Shewanella amazonensis (strain ATCC BAA-1098 / SB2B).